The following is a 405-amino-acid chain: Elongation factor Tu (405 aa).

Residues 10–215 (KPHVNIGTIG…AVDSYIPTPE (206 aa)) enclose the tr-type G domain. Residues 19-26 (GHVDHGKT) are G1. 19–26 (GHVDHGKT) lines the GTP pocket. Threonine 26 contributes to the Mg(2+) binding site. The tract at residues 61–65 (GITIN) is G2. The tract at residues 82 to 85 (DCPG) is G3. Residues 82-86 (DCPGH) and 137-140 (NKVD) contribute to the GTP site. The interval 137 to 140 (NKVD) is G4. Residues 175 to 177 (SAL) form a G5 region.

The protein belongs to the TRAFAC class translation factor GTPase superfamily. Classic translation factor GTPase family. EF-Tu/EF-1A subfamily. In terms of assembly, monomer.

It is found in the cytoplasm. The catalysed reaction is GTP + H2O = GDP + phosphate + H(+). Its function is as follows. GTP hydrolase that promotes the GTP-dependent binding of aminoacyl-tRNA to the A-site of ribosomes during protein biosynthesis. In Deinococcus radiodurans (strain ATCC 13939 / DSM 20539 / JCM 16871 / CCUG 27074 / LMG 4051 / NBRC 15346 / NCIMB 9279 / VKM B-1422 / R1), this protein is Elongation factor Tu.